A 61-amino-acid polypeptide reads, in one-letter code: Metallothionein-2 (61 aa).

The residue at position 1 (Met1) is an N-acetylmethionine. The beta stretch occupies residues 1–29 (MDPNCSCVAGDSCTCAGSCKCKECKCTSC). Cys5, Cys7, Cys13, Cys15, Cys19, Cys21, Cys24, Cys26, Cys29, Cys33, Cys34, Cys36, Cys37, Cys41, Cys44, Cys48, Cys50, Cys57, Cys59, and Cys60 together coordinate a divalent metal cation. An antigenic epitope region spans residues 20 to 25 (KCKECK). Residues 30–61 (KKSCCSCCPVGCAKCAQGCICKGASDKCNCCA) form an alpha region.

The protein belongs to the metallothionein superfamily. Type 1 family.

Its function is as follows. Metallothioneins have a high content of cysteine residues that bind various heavy metals; these proteins are transcriptionally regulated by both heavy metals and glucocorticoids. The chain is Metallothionein-2 (MT2) from Macaca fascicularis (Crab-eating macaque).